The chain runs to 490 residues: Cruciferin BnC1 (490 aa).

The N-terminal stretch at 1–23 (MARLSSLLSFSLALLIFLHGSTA) is a signal peptide. 2 disulfides stabilise this stretch: C30–C63 and C106–C307. Cupin type-1 domains are found at residues 35-263 (LNAL…RTAQ) and 313-462 (DNLD…EEAR). T109 is subject to Phosphothreonine. Residues 113 to 164 (SSVFQPSGGSPSGEGQGQGQQGQGQGHQGQGQGQQGQQGQQGQQSQGQGFRD) are disordered. The span at 122–148 (SPSGEGQGQGQQGQGQGHQGQGQGQQG) shows a compositional bias: gly residues. The span at 149 to 161 (QQGQQGQQSQGQG) shows a compositional bias: low complexity. At Y330 the chain carries Phosphotyrosine. The residue at position 332 (S332) is a Phosphoserine. T426 carries the post-translational modification Phosphothreonine.

It belongs to the 11S seed storage protein (globulins) family. Hexamer; each subunit is composed of an acidic and a basic chain derived from a single precursor and linked by a disulfide bond.

Its function is as follows. This is a seed storage protein. The sequence is that of Cruciferin BnC1 (BnC1) from Brassica napus (Rape).